The primary structure comprises 304 residues: Acetyl-coenzyme A carboxylase carboxyl transferase subunit beta (304 aa).

Residues 23 to 292 form the CoA carboxyltransferase N-terminal domain; sequence VWTKCDSCGQ…PNPEAPREGV (270 aa). The Zn(2+) site is built by Cys-27, Cys-30, Cys-46, and Cys-49. The C4-type zinc finger occupies 27-49; that stretch reads CDSCGQVLYRAELERNLEVCPKC. A disordered region spans residues 284–304; it reads NPEAPREGVVVPPVPDQEPEA. A compositionally biased stretch (pro residues) spans 295 to 304; it reads PPVPDQEPEA.

This sequence belongs to the AccD/PCCB family. As to quaternary structure, acetyl-CoA carboxylase is a heterohexamer composed of biotin carboxyl carrier protein (AccB), biotin carboxylase (AccC) and two subunits each of ACCase subunit alpha (AccA) and ACCase subunit beta (AccD). Zn(2+) is required as a cofactor.

It localises to the cytoplasm. It catalyses the reaction N(6)-carboxybiotinyl-L-lysyl-[protein] + acetyl-CoA = N(6)-biotinyl-L-lysyl-[protein] + malonyl-CoA. It functions in the pathway lipid metabolism; malonyl-CoA biosynthesis; malonyl-CoA from acetyl-CoA: step 1/1. Its function is as follows. Component of the acetyl coenzyme A carboxylase (ACC) complex. Biotin carboxylase (BC) catalyzes the carboxylation of biotin on its carrier protein (BCCP) and then the CO(2) group is transferred by the transcarboxylase to acetyl-CoA to form malonyl-CoA. The protein is Acetyl-coenzyme A carboxylase carboxyl transferase subunit beta of Shigella boydii serotype 18 (strain CDC 3083-94 / BS512).